The sequence spans 191 residues: Succinoglycan biosynthesis protein ExoI (191 aa).

The tract at residues 1-21 is disordered; it reads MTRIKSAVAAGGRRAPHSARL.

Its pathway is glycan metabolism; exopolysaccharide biosynthesis. The sequence is that of Succinoglycan biosynthesis protein ExoI (exoI) from Rhizobium meliloti (strain 1021) (Ensifer meliloti).